A 159-amino-acid chain; its full sequence is NADH-quinone oxidoreductase subunit B (159 aa).

Residues Cys-37, Cys-38, Cys-102, and Cys-132 each coordinate [4Fe-4S] cluster.

It belongs to the complex I 20 kDa subunit family. NDH-1 is composed of 14 different subunits. Subunits NuoB, C, D, E, F, and G constitute the peripheral sector of the complex. [4Fe-4S] cluster serves as cofactor.

It is found in the cell inner membrane. The catalysed reaction is a quinone + NADH + 5 H(+)(in) = a quinol + NAD(+) + 4 H(+)(out). NDH-1 shuttles electrons from NADH, via FMN and iron-sulfur (Fe-S) centers, to quinones in the respiratory chain. Couples the redox reaction to proton translocation (for every two electrons transferred, four hydrogen ions are translocated across the cytoplasmic membrane), and thus conserves the redox energy in a proton gradient. The sequence is that of NADH-quinone oxidoreductase subunit B from Polaromonas naphthalenivorans (strain CJ2).